We begin with the raw amino-acid sequence, 439 residues long: Potassium/proton antiporter CemA (439 aa).

6 helical membrane-spanning segments follow: residues 55-75 (IMLY…WSLL), 79-99 (ISLF…NFFN), 220-240 (YMLF…IWFL), 317-337 (LLHL…FILG), 364-384 (ILLL…EIVI), and 399-419 (IISC…KYWI).

The protein belongs to the CemA family.

Its subcellular location is the plastid. The protein resides in the chloroplast inner membrane. It catalyses the reaction K(+)(in) + H(+)(out) = K(+)(out) + H(+)(in). Contributes to K(+)/H(+) antiport activity by supporting proton efflux to control proton extrusion and homeostasis in chloroplasts in a light-dependent manner to modulate photosynthesis. Prevents excessive induction of non-photochemical quenching (NPQ) under continuous-light conditions. Indirectly promotes efficient inorganic carbon uptake into chloroplasts. The polypeptide is Potassium/proton antiporter CemA (Physcomitrium patens (Spreading-leaved earth moss)).